The primary structure comprises 381 residues: 8-amino-7-oxononanoate synthase (381 aa).

R27 is a substrate binding site. 105–106 contributes to the pyridoxal 5'-phosphate binding site; it reads GY. H130 is a substrate binding site. Pyridoxal 5'-phosphate is bound by residues S176, 201 to 204, and 232 to 235; these read DEAH and TLSK. K235 carries the post-translational modification N6-(pyridoxal phosphate)lysine. T345 is a substrate binding site.

Belongs to the class-II pyridoxal-phosphate-dependent aminotransferase family. BioF subfamily. Homodimer. Pyridoxal 5'-phosphate is required as a cofactor.

It carries out the reaction 6-carboxyhexanoyl-[ACP] + L-alanine + H(+) = (8S)-8-amino-7-oxononanoate + holo-[ACP] + CO2. It participates in cofactor biosynthesis; biotin biosynthesis. In terms of biological role, catalyzes the decarboxylative condensation of pimeloyl-[acyl-carrier protein] and L-alanine to produce 8-amino-7-oxononanoate (AON), [acyl-carrier protein], and carbon dioxide. The sequence is that of 8-amino-7-oxononanoate synthase from Mycolicibacterium paratuberculosis (strain ATCC BAA-968 / K-10) (Mycobacterium paratuberculosis).